The primary structure comprises 421 residues: CinA-like protein (421 aa).

This sequence belongs to the CinA family.

In Synechococcus elongatus (strain ATCC 33912 / PCC 7942 / FACHB-805) (Anacystis nidulans R2), this protein is CinA-like protein.